Consider the following 726-residue polypeptide: Long-chain-fatty-acid--CoA ligase ACSBG1 (726 aa).

Residues 1–39 (MPDSRAAPQESLLDASLGTTQENVGTSSLTDGQTLSKEP) are disordered. The segment covering 17-36 (LGTTQENVGTSSLTDGQTLS) has biased composition (polar residues). A Phosphoserine modification is found at Ser-36. A Phosphotyrosine modification is found at Tyr-641. The segment at 707 to 726 (SKQGSSLPGFSLRWQTGASS) is disordered.

This sequence belongs to the ATP-dependent AMP-binding enzyme family. Bubblegum subfamily.

Its subcellular location is the cytoplasm. It is found in the cytoplasmic vesicle. The protein localises to the microsome. The protein resides in the endoplasmic reticulum. It localises to the cell membrane. It catalyses the reaction a long-chain fatty acid + ATP + CoA = a long-chain fatty acyl-CoA + AMP + diphosphate. It carries out the reaction (E)-hexadec-2-enoate + ATP + CoA = (2E)-hexadecenoyl-CoA + AMP + diphosphate. The enzyme catalyses hexadecanoate + ATP + CoA = hexadecanoyl-CoA + AMP + diphosphate. Catalyzes the conversion of fatty acids such as long-chain and very long-chain fatty acids to their active form acyl-CoAs for both synthesis of cellular lipids, and degradation via beta-oxidation. Can activate diverse saturated, monosaturated and polyunsaturated fatty acids. The protein is Long-chain-fatty-acid--CoA ligase ACSBG1 of Bos taurus (Bovine).